The following is a 512-amino-acid chain: Immunoglobulin delta heavy chain (512 aa).

2 Ig-like domains span residues 1–97 (RLQL…MYYC) and 135–227 (PDVF…KEIF). A variable (V) domain, involved in antigen recognition region spans residues 1–129 (RLQLQESGPG…GQGTTVHVSS (129 aa)). Intrachain disulfides connect Cys-22–Cys-97 and Cys-157–Cys-213. The segment at 130–512 (APTKAPDVFP…VSYVTDHGPM (383 aa)) is constant (C) domain. Residues 225–296 (EIFRWPESPK…TPECPSHTQP (72 aa)) are disordered. A compositionally biased stretch (polar residues) spans 235 to 247 (AQASSVPTAQPQA). An O-linked (GalNAc...) serine glycan is attached at Ser-238. O-linked (GalNAc...) threonine glycosylation is found at Thr-255, Thr-256, Thr-260, and Thr-261. Basic and acidic residues predominate over residues 267–287 (GGEEKKKEKEKEEQEERETKT). Ig-like domains follow at residues 304 to 392 (PAVQ…RLMA) and 396 to 502 (PAAQ…RSLE). Cystine bridges form between Cys-319-Cys-378 and Cys-423-Cys-484. N-linked (GlcNAc...) asparagine glycans are attached at residues Asn-354, Asn-445, and Asn-496.

Immunoglobulins are composed of two identical heavy chains and two identical light chains; disulfide-linked. An IgD molecule contains thus a delta heavy chain combined with either a kappa or a lambda light chains. Kappa light chains are found predominantly on the membrane IgD (mIgD) form and lambda on the secreted IgD (sIgD) form, this fact is poorly understood. Membrane-bound IgD molecules are non-covalently associated with a heterodimer of CD79A and CD79B.

The protein resides in the secreted. The protein localises to the cell membrane. Immunoglobulins, also known as antibodies, are membrane-bound or secreted glycoproteins produced by B lymphocytes. In the recognition phase of humoral immunity, the membrane-bound immunoglobulins serve as receptors which, upon binding of a specific antigen, trigger the clonal expansion and differentiation of B lymphocytes into immunoglobulins-secreting plasma cells. Secreted immunoglobulins mediate the effector phase of humoral immunity, which results in the elimination of bound antigens. The antigen binding site is formed by the variable domain of one heavy chain, together with that of its associated light chain. Thus, each immunoglobulin has two antigen binding sites with remarkable affinity for a particular antigen. The variable domains are assembled by a process called V-(D)-J rearrangement and can then be subjected to somatic hypermutations which, after exposure to antigen and selection, allow affinity maturation for a particular antigen. IgD is the major antigen receptor isotype on the surface of most peripheral B cells, where it is coexpressed with IgM. The membrane-bound IgD (mIgD) induces the phosphorylation of CD79A and CD79B by the Src family of protein tyrosine kinases. Soluble IgD (sIgD) concentration in serum is below those of IgG, IgA, and IgM but much higher than that of IgE. IgM and IgD molecules present on B cells have identical V regions and antigen-binding sites. After the antigen binds to the B cell receptor, the secreted form sIgD is shut off. IgD is a potent inducer of TNF, IL1B, and IL1RN. IgD also induces release of IL6, IL10, and LIF from peripheral blood mononuclear cells. Monocytes seem to be the main producers of cytokines in vitro in the presence of IgD. The polypeptide is Immunoglobulin delta heavy chain (Homo sapiens (Human)).